A 248-amino-acid polypeptide reads, in one-letter code: Mannose-binding protein C (248 aa).

Residues 1 to 20 form the signal peptide; that stretch reads MSPFLSLPLLLLSVLSASYS. The disordered stretch occupies residues 36–112; sequence IACSSPGING…GDSSLAASER (77 aa). In terms of domain architecture, Collagen-like spans 42–99; it reads GINGFPGKDGRDGTKGEKGEPGQGLRGLQGPPGKLGPPGNPGPSGSPGAKGQKGDPGA. Pro-47 is subject to 4-hydroxyproline. Basic and acidic residues predominate over residues 49–61; it reads KDGRDGTKGEKGE. 4-hydroxyproline occurs at positions 73, 79, 82, and 88. Residues 112–130 are a coiled coil; it reads RKALQTEMARIKKWVTFSL. In terms of domain architecture, C-type lectin spans 134–245; the sequence is VGKKLFLSNG…CSSSHLAICE (112 aa). 2 disulfide bridges follow: Cys-155-Cys-244 and Cys-222-Cys-236.

In terms of assembly, oligomeric complex of 3 or more homotrimers. Interacts with MASP1 and MASP2. Interacts with MEP1A and MEP1B and may inhibit their catalytic activity. In terms of processing, hydroxylation on proline residues within the sequence motif, GXPG, is most likely to be 4-hydroxy as this fits the requirement for 4-hydroxylation in vertebrates.

It is found in the secreted. Its function is as follows. Calcium-dependent lectin involved in innate immune defense. Binds mannose, fucose and N-acetylglucosamine on different microorganisms and activates the lectin complement pathway. Binds to late apoptotic cells, as well as to apoptotic blebs and to necrotic cells, but not to early apoptotic cells, facilitating their uptake by macrophages. The protein is Mannose-binding protein C (MBL2) of Saguinus oedipus (Cotton-top tamarin).